The primary structure comprises 349 residues: Peroxidase 23 (349 aa).

A signal peptide spans 1-29 (MGFSSSLSCSAMGALIVGCLLLQASNSNA). Gln30 bears the Pyrrolidone carboxylic acid mark. Disulfide bonds link Cys40-Cys120, Cys73-Cys78, Cys126-Cys329, and Cys206-Cys238. His71 functions as the Proton acceptor in the catalytic mechanism. Residues Asp72, Val75, Gly77, Asp79, and Ser81 each contribute to the Ca(2+) site. A glycan (N-linked (GlcNAc...) asparagine) is linked at Asn86. Position 168 (Pro168) interacts with substrate. His199 serves as a coordination point for heme b. Thr200 contributes to the Ca(2+) binding site. 2 N-linked (GlcNAc...) asparagine glycosylation sites follow: Asn217 and Asn243. 3 residues coordinate Ca(2+): Asp251, Thr254, and Asp259.

Belongs to the peroxidase family. Classical plant (class III) peroxidase subfamily. Heme b is required as a cofactor. Requires Ca(2+) as cofactor.

The protein localises to the secreted. The protein resides in the vacuole. The catalysed reaction is 2 a phenolic donor + H2O2 = 2 a phenolic radical donor + 2 H2O. Its function is as follows. Removal of H(2)O(2), oxidation of toxic reductants, biosynthesis and degradation of lignin, suberization, auxin catabolism, response to environmental stresses such as wounding, pathogen attack and oxidative stress. These functions might be dependent on each isozyme/isoform in each plant tissue. The chain is Peroxidase 23 (PER23) from Arabidopsis thaliana (Mouse-ear cress).